Consider the following 309-residue polypeptide: NAD-dependent protein deacylase sirtuin-5, mitochondrial (309 aa).

A mitochondrion-targeting transit peptide spans Met-1 to Pro-35. The region spanning Ser-36–Glu-306 is the Deacetylase sirtuin-type domain. Residue Gly-57 to Trp-76 participates in NAD(+) binding. 2 residues coordinate substrate: Tyr-101 and Arg-104. Residue Gln-139–Asp-142 coordinates NAD(+). The active-site Proton acceptor is His-157. Zn(2+) contacts are provided by Cys-165, Cys-168, Cys-206, and Cys-211. Residues Gly-248–Ser-250, Asn-274–Glu-276, and Cys-292 each bind NAD(+).

It belongs to the sirtuin family. Class III subfamily. The cofactor is Zn(2+).

The protein localises to the mitochondrion. The protein resides in the cytoplasm. Its subcellular location is the cytosol. It localises to the nucleus. The enzyme catalyses N(6)-malonyl-L-lysyl-[protein] + NAD(+) + H2O = 2''-O-malonyl-ADP-D-ribose + nicotinamide + L-lysyl-[protein]. It carries out the reaction N(6)-succinyl-L-lysyl-[protein] + NAD(+) + H2O = 2''-O-succinyl-ADP-D-ribose + nicotinamide + L-lysyl-[protein]. The catalysed reaction is N(6)-glutaryl-L-lysyl-[protein] + NAD(+) + H2O = 2''-O-glutaryl-ADP-D-ribose + nicotinamide + L-lysyl-[protein]. Its function is as follows. NAD-dependent lysine demalonylase, desuccinylase and deglutarylase that specifically removes malonyl, succinyl and glutaryl groups on target proteins. Has weak NAD-dependent protein deacetylase activity; however this activity may not be physiologically relevant in vivo. This chain is NAD-dependent protein deacylase sirtuin-5, mitochondrial (sirt5), found in Xenopus tropicalis (Western clawed frog).